A 165-amino-acid chain; its full sequence is Growth arrest and DNA damage-inducible protein GADD45 alpha (165 aa).

Thr-2 bears the Phosphothreonine mark.

It belongs to the GADD45 family. Interacts with AURKA, PCNA, GADD45GIP1 and MAPK14.

The protein localises to the nucleus. In terms of biological role, might affect PCNA interaction with some CDK (cell division protein kinase) complexes; stimulates DNA excision repair in vitro and inhibits entry of cells into S phase. In T-cells, functions as a regulator of p38 MAPKs by inhibiting p88 phosphorylation and activity. The chain is Growth arrest and DNA damage-inducible protein GADD45 alpha (GADD45A) from Cricetulus griseus (Chinese hamster).